The following is a 220-amino-acid chain: Regulatory protein VanRB (220 aa).

The Response regulatory domain maps to 4–117 (RILLVEDDDH…ILLKRVEALL (114 aa)). 4-aspartylphosphate is present on D53. A DNA-binding region (ompR/PhoB-type) is located at residues 124–218 (AKEFRVGRLT…IRGVGYRLEE (95 aa)).

May be phosphorylated by VanSB. May also be dephosphorylated by VanSB.

It localises to the cytoplasm. Functionally, member of the two-component regulatory system VanSB/VanRB. Activates the transcription of vanSB, vanYB and vanW in response to vancomycin which results in vancomycin resistance. The sequence is that of Regulatory protein VanRB (vanRB) from Enterococcus faecalis (strain ATCC 700802 / V583).